The sequence spans 69 residues: Putative F-box protein At2g33705 (69 aa).

One can recognise an F-box domain in the interval 14 to 59 (GVNLEQIPYDLVLEILLKLSAKSIARFRCVSKLWDSTFRSRYFTEL).

The sequence is that of Putative F-box protein At2g33705 from Arabidopsis thaliana (Mouse-ear cress).